Consider the following 200-residue polypeptide: Transcription elongation factor A protein-like 6 (200 aa).

Residues 1–200 form a disordered region; the sequence is MEKPYNKNEG…QRGLHDIPYL (200 aa). The span at 20–36 shows a compositional bias: acidic residues; that stretch reads DEVEPDDEGKSDEEEKP. Phosphoserine is present on S30. Composition is skewed to basic and acidic residues over residues 37–52, 60–80, and 115–154; these read DAEG…KAEG, LEDK…KPQG, and DRGT…EELR. Position 65 is a phosphoserine (S65).

The protein belongs to the TFS-II family. TFA subfamily.

It localises to the nucleus. Its function is as follows. May be involved in transcriptional regulation. The polypeptide is Transcription elongation factor A protein-like 6 (TCEAL6) (Homo sapiens (Human)).